The following is a 356-amino-acid chain: Serpentine receptor class epsilon-29 (356 aa).

7 helical membrane-spanning segments follow: residues 29-49 (IVELFSYLICAYILTLNIYII), 61-81 (ILAIPLFGIWFELIIGKLITI), 119-139 (LLIFGGFLQWHYMFTIIFGVL), 161-181 (LFIPLFLTVISQFLSISTSLA), 190-210 (FLAQLPWIICCPFSAMAYFFV), 251-271 (LVFVVLSCIALCGIGITALFY), and 281-301 (FVENFLFLHPYLSCLTAIFSV).

It belongs to the nematode receptor-like protein sre family.

The protein localises to the membrane. The chain is Serpentine receptor class epsilon-29 (sre-29) from Caenorhabditis elegans.